The sequence spans 729 residues: Transketolase (729 aa).

H97 is a substrate binding site. Residues H138 and 186 to 188 (GPL) each bind thiamine diphosphate. Residue D227 participates in Mg(2+) binding. Residues G228 and N257 each coordinate thiamine diphosphate. The Mg(2+) site is built by N257 and I259. Substrate is bound by residues H332, R423, and S450. A thiamine diphosphate-binding site is contributed by H332. Catalysis depends on E477, which acts as the Proton donor. F503 provides a ligand contact to thiamine diphosphate. Substrate contacts are provided by H527, D535, and R586.

This sequence belongs to the transketolase family. Homodimer. It depends on Mg(2+) as a cofactor. Ca(2+) serves as cofactor. The cofactor is Mn(2+). Requires Co(2+) as cofactor. Thiamine diphosphate is required as a cofactor.

The enzyme catalyses D-sedoheptulose 7-phosphate + D-glyceraldehyde 3-phosphate = aldehydo-D-ribose 5-phosphate + D-xylulose 5-phosphate. Catalyzes the transfer of a two-carbon ketol group from a ketose donor to an aldose acceptor, via a covalent intermediate with the cofactor thiamine pyrophosphate. The sequence is that of Transketolase (tkt) from Streptococcus pyogenes serotype M18 (strain MGAS8232).